Consider the following 285-residue polypeptide: Polyamine aminopropyltransferase (285 aa).

The region spanning 5–241 (DNWYIEHFQP…GWWSVTMASK (237 aa)) is the PABS domain. Residue Q35 coordinates S-methyl-5'-thioadenosine. H66 and D90 together coordinate spermidine. S-methyl-5'-thioadenosine-binding positions include D110 and 141–142 (DG). D160 serves as the catalytic Proton acceptor. 160 to 163 (DSTD) contributes to the spermidine binding site. Position 167 (P167) interacts with S-methyl-5'-thioadenosine.

This sequence belongs to the spermidine/spermine synthase family. Homodimer or homotetramer.

Its subcellular location is the cytoplasm. It catalyses the reaction S-adenosyl 3-(methylsulfanyl)propylamine + putrescine = S-methyl-5'-thioadenosine + spermidine + H(+). It participates in amine and polyamine biosynthesis; spermidine biosynthesis; spermidine from putrescine: step 1/1. Catalyzes the irreversible transfer of a propylamine group from the amino donor S-adenosylmethioninamine (decarboxy-AdoMet) to putrescine (1,4-diaminobutane) to yield spermidine. This Xanthomonas axonopodis pv. citri (strain 306) protein is Polyamine aminopropyltransferase.